A 355-amino-acid polypeptide reads, in one-letter code: RNA binding protein fox-1 homolog 1 (355 aa).

Positions 1–123 (MNCEREQLRG…QPKRLHVSNI (123 aa)) are disordered. The segment covering 70–112 (QSHSEQSAADTSAHTVSGTATTDDSAPTDGQPQTQPSENTENK) has biased composition (polar residues). Residues 116–174 (KRLHVSNIPFRFRDPDLRQMFGGFGFVTFENSADADRAREKLHGTVVEGRKIEVNNATA) form the RRM domain. Position 298 is an asymmetric dimethylarginine (arginine 298).

As to quaternary structure, binds to the C-terminus of ATXN2.

Its subcellular location is the nucleus. The protein resides in the cytoplasm. RNA-binding protein that regulates alternative splicing events by binding to 5'-UGCAUGU-3' elements. Prevents binding of U2AF2 to the 3'-splice site. Regulates alternative splicing of tissue-specific exons and of differentially spliced exons during erythropoiesis. The polypeptide is RNA binding protein fox-1 homolog 1 (RBFOX1) (Bos taurus (Bovine)).